Reading from the N-terminus, the 427-residue chain is Enolase (427 aa).

Glutamine 163 is a (2R)-2-phosphoglycerate binding site. Glutamate 205 (proton donor) is an active-site residue. Mg(2+) is bound by residues aspartate 242, glutamate 285, and aspartate 312. (2R)-2-phosphoglycerate is bound by residues lysine 337, arginine 366, serine 367, and lysine 388. Lysine 337 (proton acceptor) is an active-site residue.

Belongs to the enolase family. Requires Mg(2+) as cofactor.

Its subcellular location is the cytoplasm. The protein resides in the secreted. It localises to the cell surface. The enzyme catalyses (2R)-2-phosphoglycerate = phosphoenolpyruvate + H2O. The protein operates within carbohydrate degradation; glycolysis; pyruvate from D-glyceraldehyde 3-phosphate: step 4/5. In terms of biological role, catalyzes the reversible conversion of 2-phosphoglycerate (2-PG) into phosphoenolpyruvate (PEP). It is essential for the degradation of carbohydrates via glycolysis. The polypeptide is Enolase (Ralstonia pickettii (strain 12J)).